Here is a 150-residue protein sequence, read N- to C-terminus: Mating pheromone 1 (150 aa).

The N-terminal stretch at Met-1–Ala-16 is a signal peptide. Residues Phe-17 to Lys-52 constitute a propeptide that is removed on maturation.

The protein resides in the secreted. Its function is as follows. Mating ciliate pheromones (or gamones) are diffusible extracellular communication signals that distinguish different intraspecific classes of cells commonly referred to as 'mating types'. They prepare the latter for conjugation by changing their cell surface properties. The chain is Mating pheromone 1 from Euplotoides octocarinatus (Freshwater ciliate).